The following is a 176-amino-acid chain: Urease accessory protein UreE (176 aa).

The disordered stretch occupies residues 134-176 (FTPEGGAYGHGRTHAHEHGHTNHHGQHHDHADHGHSHDHSHDQ). A compositionally biased stretch (basic and acidic residues) spans 161–176 (HDHADHGHSHDHSHDQ).

It belongs to the UreE family.

The protein resides in the cytoplasm. Involved in urease metallocenter assembly. Binds nickel. Probably functions as a nickel donor during metallocenter assembly. In Ruegeria sp. (strain TM1040) (Silicibacter sp.), this protein is Urease accessory protein UreE.